A 340-amino-acid polypeptide reads, in one-letter code: Alcohol dehydrogenase patD (340 aa).

Cysteine 46 contacts Zn(2+). Histidine 47 provides a ligand contact to NAD(+). Positions 67, 68, 101, 104, 112, and 154 each coordinate Zn(2+). Histidine 67 contributes to the substrate binding site. NAD(+) contacts are provided by residues 178–183 (GLGGLG), 198–203 (VALSRD), lysine 206, 265–267 (LSI), 289–291 (PSG), and 297–299 (EDA).

It belongs to the zinc-containing alcohol dehydrogenase family. The cofactor is Zn(2+).

The protein resides in the cytoplasm. It localises to the cytosol. It carries out the reaction neopatulin + NADPH + H(+) = (E)-ascladiol + NADP(+). It functions in the pathway mycotoxin biosynthesis; patulin biosynthesis. Its function is as follows. Alcohol dehydrogenase; part of the gene cluster that mediates the biosynthesis of patulin, an acetate-derived tetraketide mycotoxin produced by several fungal species that shows antimicrobial properties against several bacteria. PatD catalyzes the conversion of neopatulin into E-ascladiol. The pathway begins with the synthesis of 6-methylsalicylic acid by the polyketide synthase (PKS) patK via condensation of acetate and malonate units. The 6-methylsalicylic acid decarboxylase patG then catalyzes the decarboxylation of 6-methylsalicylic acid to yield m-cresol (also known as 3-methylphenol). These first reactions occur in the cytosol. The intermediate m-cresol is then transported into the endoplasmic reticulum where the cytochrome P450 monooxygenase patH converts it to m-hydroxybenzyl alcohol, which is further converted to gentisyl alcohol by the cytochrome P450 monooxygenase patI. The oxidoreductases patJ and patO further convert gentisyl alcohol to isoepoxydon in the vacuole. PatN catalyzes then the transformation of isoepoxydon into phyllostine. The cluster protein patF is responsible for the conversion from phyllostine to neopatulin whereas the alcohol dehydrogenase patD converts neopatulin to E-ascladiol. The steps between isoepoxydon and E-ascladiol occur in the cytosol, and E-ascladiol is probably secreted to the extracellular space by one of the cluster-specific transporters patC or patM. Finally, the secreted patulin synthase patE catalyzes the conversion of E-ascladiol to patulin. The polypeptide is Alcohol dehydrogenase patD (Penicillium expansum (Blue mold rot fungus)).